A 78-amino-acid polypeptide reads, in one-letter code: Defensin-like protein 281 (78 aa).

The N-terminal stretch at 1–23 (MASTKYLVLLFICLSVLLTPGLG) is a signal peptide. Cystine bridges form between C37–C60, C46–C72, and C50–C74.

Belongs to the DEFL family.

Its subcellular location is the secreted. The polypeptide is Defensin-like protein 281 (Arabidopsis thaliana (Mouse-ear cress)).